A 452-amino-acid chain; its full sequence is MREHYGVVTPMHNSRPRRVAVLSVHTSPLAQPGTGDAGGMNVYVLQSAIQMARRGVEVEIFTRATSSADAPVQEAAPGVLVRNVVAGPFEGLDKQDLPTQLCAFVAGVLREEARHEPGYYNLVHSHYWLSGQVGWLARDRWGVPLVHTAHTLAAVKNLSLADGDTPEPAARQIGEQQVVAESDRLVANTTEESDQLVRHYGADPNRIDVVAPGADLTRYRPGDRAAARAKLGLDPRETVVTFVGRIQPLKAPDVLLRAAAELIARDPESTLRVLVVGGPSGSGLARPDALIELASSLGIAARVTFLPPQAPDRLVDVYRASDLVAVPSYSESFGLVAIEAQACGTPVIAANVGGLGVAVRNGETGLLVDGHRTEDWATALQSLVSEPGRLAALAAEAPRHAENFSWEHTADGLLESYRMATVNYNYGHGPSEFAPRRAGGLWKLRRAGGVRA.

His-25 contributes to the 1D-myo-inositol 3-phosphate binding site. UDP-N-acetyl-alpha-D-glucosamine contacts are provided by residues Gln-31–Pro-32 and Gly-39. 1D-myo-inositol 3-phosphate-binding positions include Asp-36–Asn-41, Lys-94, Tyr-127, Thr-151, and Arg-171. UDP-N-acetyl-alpha-D-glucosamine contacts are provided by Arg-245, Lys-250, and Gln-309. Mg(2+)-binding residues include Tyr-318, Arg-319, and Ser-321. Glu-331 and Glu-339 together coordinate UDP-N-acetyl-alpha-D-glucosamine. Thr-345 serves as a coordination point for Mg(2+).

The protein belongs to the glycosyltransferase group 1 family. MshA subfamily. Homodimer.

It carries out the reaction 1D-myo-inositol 3-phosphate + UDP-N-acetyl-alpha-D-glucosamine = 1D-myo-inositol 2-acetamido-2-deoxy-alpha-D-glucopyranoside 3-phosphate + UDP + H(+). Its function is as follows. Catalyzes the transfer of a N-acetyl-glucosamine moiety to 1D-myo-inositol 3-phosphate to produce 1D-myo-inositol 2-acetamido-2-deoxy-glucopyranoside 3-phosphate in the mycothiol biosynthesis pathway. This Rhodococcus jostii (strain RHA1) protein is D-inositol 3-phosphate glycosyltransferase.